A 415-amino-acid chain; its full sequence is Plant UBX domain-containing protein 16 (415 aa).

Positions Gln19–Asn69 constitute a UBA domain. The region spanning Asp333–Thr413 is the UBX domain.

This is Plant UBX domain-containing protein 16 from Arabidopsis thaliana (Mouse-ear cress).